Here is a 300-residue protein sequence, read N- to C-terminus: MHMFPLGVVEDSDPPGPPIGRASGSPPPGAGRSTAKPEELLKEATEANIVVRRTAGLNEKLAFHNNTPPTLPTPRRKAPTTGSVLNANQACNAVNLAPLDTPQRFRAVYMSITRPLDNGYYTVPRRMLEFRSVNAVAFNLLVTLRIDKAIGPGKIIDNAEQLPEATFMVHIGDFRRKKSEVYSADYCKMKIEKMGLVFALGGIGGTSLHTRSTGKMSKTLHAQLGFKKTSCYPPMDINEDLNRLLWRSRCKIVRIQAVLQPSVPQELRIYDDVIINDDQGVFKVLQTVVPSNARKRPPSQ.

The segment at 1–36 is disordered; that stretch reads MHMFPLGVVEDSDPPGPPIGRASGSPPPGAGRSTAK.

In terms of assembly, homodimer. Dimerization is critical for virion formation. Interacts with host ANP32B.

It is found in the virion. The protein resides in the host cell membrane. Its function is as follows. The M protein has a crucial role in virus assembly and interacts with the RNP complex as well as with the viral membrane. Associates with phosphatidylserine (PS) and phosphatidylinositol 4,5-bisphosphate (PIP2) at the plasma membrane. Interaction with PIP2 triggers matrix protein lattice polymerization. Matrix proteins induce host membrane deformation and curvature necessary for virion assembly/budding. This Measles virus (strain Yamagata-1) (MeV) protein is Matrix protein (M).